We begin with the raw amino-acid sequence, 285 residues long: HTH-type transcriptional regulator MurR (285 aa).

Residues 1–77 (MLYLTKISNA…MALIGEYSAS (77 aa)) form the HTH rpiR-type domain. The H-T-H motif DNA-binding region spans 37–56 (SRQMAKQLGISQSSIVKFAQ). The SIS domain maps to 128–268 (IIEVISKAPF…FVGLVQLNDV (141 aa)).

As to quaternary structure, homotetramer.

It functions in the pathway amino-sugar metabolism; N-acetylmuramate degradation [regulation]. Represses the expression of the murPQ operon involved in the uptake and degradation of N-acetylmuramic acid (MurNAc). Binds to two adjacent inverted repeats within the operator region. MurNAc 6-phosphate, the substrate of MurQ, is the specific inducer that weakens binding of MurR to the operator. The polypeptide is HTH-type transcriptional regulator MurR (Escherichia coli O139:H28 (strain E24377A / ETEC)).